Consider the following 426-residue polypeptide: 3-phosphoshikimate 1-carboxyvinyltransferase (426 aa).

3 residues coordinate 3-phosphoshikimate: K23, S24, and R28. Position 23 (K23) interacts with phosphoenolpyruvate. The phosphoenolpyruvate site is built by G96 and R124. Residues T170, S171, Q172, S198, D314, and K341 each contribute to the 3-phosphoshikimate site. Q172 serves as a coordination point for phosphoenolpyruvate. D314 (proton acceptor) is an active-site residue. Residues R345, R386, and K411 each contribute to the phosphoenolpyruvate site.

This sequence belongs to the EPSP synthase family. Monomer.

The protein localises to the cytoplasm. The enzyme catalyses 3-phosphoshikimate + phosphoenolpyruvate = 5-O-(1-carboxyvinyl)-3-phosphoshikimate + phosphate. It functions in the pathway metabolic intermediate biosynthesis; chorismate biosynthesis; chorismate from D-erythrose 4-phosphate and phosphoenolpyruvate: step 6/7. In terms of biological role, catalyzes the transfer of the enolpyruvyl moiety of phosphoenolpyruvate (PEP) to the 5-hydroxyl of shikimate-3-phosphate (S3P) to produce enolpyruvyl shikimate-3-phosphate and inorganic phosphate. The protein is 3-phosphoshikimate 1-carboxyvinyltransferase of Trichormus variabilis (strain ATCC 29413 / PCC 7937) (Anabaena variabilis).